A 577-amino-acid chain; its full sequence is Moesin (577 aa).

Positions 2–295 constitute an FERM domain; sequence PKTINVRVTT…GNHELYMRRR (294 aa). Ser74 is subject to Phosphoserine. Lys79 bears the N6-acetyllysine mark. Lys83 is subject to N6-succinyllysine. The [IL]-x-C-x-x-[DE] motif signature appears at 115–120; sequence IYCPPE. Phosphotyrosine is present on Tyr116. Cys117 carries the S-nitrosocysteine modification. Residues Lys139 and Lys165 each carry the N6-acetyllysine modification. Over residues 375–401 the composition is skewed to basic and acidic residues; it reads LEQERKRAQSEAEKLAKERQEAEEAKE. Disordered stretches follow at residues 375–409 and 466–518; these read LEQE…ASQD and AMST…NERV. Ser407 is subject to Phosphoserine. Residues 476–487 show a composition bias toward acidic residues; it reads AENEQDEQDENG. Over residues 492-518 the composition is skewed to basic and acidic residues; sequence AELRADAMAKDRSEEERTTEAEKNERV. Phosphoserine is present on Ser527. Position 558 is a phosphothreonine; by ROCK2 and STK10 (Thr558).

In resting T-cells, part of a PAG1-NHERF1-MSN complex which is disrupted upon TCR activation. Interacts with NHERF1. Interacts with PPP1R16B. Interacts with PDZD8. Interacts with SELPLG and SYK; these interactions mediate the activation of SYK by SELPLG. Interacts with PDPN (via cytoplasmic domain); this interaction activates RHOA and promotes epithelial-mesenchymal transition. Interacts with SPN/CD43 cytoplasmic tail. Interacts with CD44. Interacts with ICAM2. Interacts with ICAM3 (via C-terminus). Interacts with PDZD8. Interacts with F-actin. Interacts with CD46. Interacts with PTPN6. Phosphorylation on Thr-558 is crucial for the formation of microvilli-like structures. Phosphorylation by ROCK2 suppresses the head-to-tail association of the N-terminal and C-terminal halves resulting in an opened conformation which is capable of actin and membrane-binding. Phosphorylation on Thr-558 by STK10 negatively regulates lymphocyte migration and polarization. In terms of processing, S-nitrosylation of Cys-117 is induced by interferon-gamma and oxidatively-modified low-densitity lipoprotein (LDL(ox)) implicating the iNOS-S100A8/9 transnitrosylase complex.

The protein resides in the cell membrane. It is found in the cytoplasm. It localises to the cytoskeleton. Its subcellular location is the apical cell membrane. The protein localises to the cell projection. The protein resides in the microvillus membrane. It is found in the microvillus. A head-to-tail association, of the N-terminal and C-terminal halves results in a closed conformation (inactive form) which is incapable of actin or membrane-binding. Its function is as follows. Ezrin-radixin-moesin (ERM) family protein that connects the actin cytoskeleton to the plasma membrane and thereby regulates the structure and function of specific domains of the cell cortex. Tethers actin filaments by oscillating between a resting and an activated state providing transient interactions between moesin and the actin cytoskeleton. Once phosphorylated on its C-terminal threonine, moesin is activated leading to interaction with F-actin and cytoskeletal rearrangement. These rearrangements regulate many cellular processes, including cell shape determination, membrane transport, and signal transduction. The role of moesin is particularly important in immunity acting on both T and B-cells homeostasis and self-tolerance, regulating lymphocyte egress from lymphoid organs. Modulates phagolysosomal biogenesis in macrophages. Participates also in immunologic synapse formation. This is Moesin from Bos taurus (Bovine).